Reading from the N-terminus, the 420-residue chain is Pre-mRNA-splicing factor RBM22 (420 aa).

Alanine 2 is subject to N-acetylalanine. Phosphoserine is present on residues serine 4 and serine 102. Residues lysine 139 and lysine 149 each participate in a glycyl lysine isopeptide (Lys-Gly) (interchain with G-Cter in SUMO2) cross-link. The C3H1-type zinc finger occupies 159–186 (RNRPHICSFWVKGECKRGEECPYRHEKP). Position 212 is an N6-acetyllysine (lysine 212). The 74-residue stretch at 232–305 (TTLYVGGLGD…RRLNVKWGRS (74 aa)) folds into the RRM domain. Lysine 290 is covalently cross-linked (Glycyl lysine isopeptide (Lys-Gly) (interchain with G-Cter in SUMO2)). Disordered stretches follow at residues 303 to 343 (GRSQ…AAEE) and 371 to 420 (IAPP…HSSP). Basic and acidic residues predominate over residues 309 to 318 (RGKEKEKDGT).

The protein belongs to the SLT11 family. In terms of assembly, component of the pre-catalytic and catalytic spliceosome complexes. Component of the postcatalytic spliceosome P complex. Interacts with PDCD6; the interaction induces translocation of PDCD6 in the cytoplasm. Interacts with PPIL1.

The protein localises to the nucleus. Its subcellular location is the cytoplasm. Functionally, required for pre-mRNA splicing as component of the activated spliceosome. Involved in the first step of pre-mRNA splicing. Binds directly to the internal stem-loop (ISL) domain of the U6 snRNA and to the pre-mRNA intron near the 5' splice site during the activation and catalytic phases of the spliceosome cycle. Involved in both translocations of the nuclear SLU7 to the cytoplasm and the cytosolic calcium-binding protein PDCD6 to the nucleus upon cellular stress responses. In Rattus norvegicus (Rat), this protein is Pre-mRNA-splicing factor RBM22 (Rbm22).